Consider the following 138-residue polypeptide: UPF0201 protein PYRAB09730 (138 aa).

The protein belongs to the UPF0201 family.

In Pyrococcus abyssi (strain GE5 / Orsay), this protein is UPF0201 protein PYRAB09730.